A 341-amino-acid polypeptide reads, in one-letter code: Paired box protein Pax-9 (341 aa).

Positions 4–130 (AFGEVNQLGG…SSISRILRNK (127 aa)) form a DNA-binding region, paired. The segment at 7–63 (EVNQLGGVFVNGRPLPNAIRLRIVELAQLGIRPCDISRQLRVSHGCVSKILARYNET) is PAI subdomain. The segment at 82–130 (TVVKHIRTYKQRDPGIFAWEIRDRLLADGVCDKYNVPSVSSISRILRNK) is RED subdomain. The interaction with KDM5B stretch occupies residues 168-189 (AAAAKVPTPPGVPAIPGSVAMP).

As to quaternary structure, interacts with KDM5B.

It is found in the nucleus. Transcription factor required for normal development of thymus, parathyroid glands, ultimobranchial bodies, teeth, skeletal elements of skull and larynx as well as distal limbs. The chain is Paired box protein Pax-9 (PAX9) from Daubentonia madagascariensis (Aye-aye).